Consider the following 218-residue polypeptide: MVKMTLIARVTDGLPLAEGLDDGRDLPDSDMYKQQVKALFKNLSRGQNDASRMSVETGPYVFHYIIEGRVCYLTMCDRSYPKKLAFQYLEDLKNEFERVNGPNIETAARPYAFIKFDTFIQKTKKLYQDTRTQRNIAKLNDELYEVHQIMTRNVQEVLGVGEKLDQVSEMSSRLTSESRIYADKAKDLNRQALIRKWAPVAIVFGVVFLLFWVKNKLW.

The Cytoplasmic segment spans residues 1-192 (MVKMTLIARV…DKAKDLNRQA (192 aa)). One can recognise a Longin domain in the interval 6-120 (LIARVTDGLP…YAFIKFDTFI (115 aa)). The v-SNARE coiled-coil homology domain occupies 135-195 (NIAKLNDELY…KDLNRQALIR (61 aa)). Residues 193-213 (LIRKWAPVAIVFGVVFLLFWV) traverse the membrane as a helical; Anchor for type IV membrane protein segment. The Vesicular segment spans residues 214-218 (KNKLW).

This sequence belongs to the synaptobrevin family. In terms of assembly, interacts with SEC24A. Mainly expressed in flowers and siliques, to a lower extent in seedlings, and barely in roots and leaves.

Its subcellular location is the golgi apparatus membrane. The protein localises to the endoplasmic reticulum membrane. Functionally, V-SNARE involved in vesicle trafficking from the ER to the Golgi complex and required for early secretion. Involved in endoplasmic reticulum (ER) biogenesis and functions as well as for Golgi-stack integrity. Essential for gametophytes development. Involved in cesium Cs(+) accumulation, a non-essential cation. This chain is 25.3 kDa vesicle transport protein SEC22-1, found in Arabidopsis thaliana (Mouse-ear cress).